The sequence spans 386 residues: D-amino-acid oxidase (386 aa).

Gly-14, Gly-15, Val-16, Val-17, Glu-39, Arg-40, Ala-51, Gly-52, and Gly-53 together coordinate FAD. The segment at 109 to 138 is disordered; that stretch reads SSSPPHPLLPPWVDPSASAAPPRELGTPDT. Residues 112-121 show a composition bias toward pro residues; the sequence is PPHPLLPPWV. Arg-174, Val-175, and Ala-176 together coordinate FAD. D-serine is bound by residues Tyr-253, Tyr-261, and Lys-332. 2 residues coordinate D-proline: Tyr-261 and Lys-332. FAD contacts are provided by Lys-332, Gly-344, Ile-345, Gly-362, and Ala-364. Lys-332 contributes to the D-dopa binding site. Residue Gly-362 participates in D-serine binding. Residue Gly-362 coordinates D-proline. Gly-362 lines the D-dopa pocket.

It belongs to the DAMOX/DASOX family.

It carries out the reaction a D-alpha-amino acid + O2 + H2O = a 2-oxocarboxylate + H2O2 + NH4(+). The enzyme catalyses D-alanine + O2 + H2O = pyruvate + H2O2 + NH4(+). It catalyses the reaction D-aspartate + O2 + H2O = oxaloacetate + H2O2 + NH4(+). Catalyzes the oxidative deamination of D-amino acids with broad substrate specificity. Enables the organism to utilize D-amino acids as a source of nutrients. The chain is D-amino-acid oxidase from Zea mays (Maize).